The primary structure comprises 543 residues: CTP synthase (543 aa).

Residues 1-265 (MTRYIFVTGG…DDYVVERFGL (265 aa)) are amidoligase domain. Ser13 is a CTP binding site. Ser13 lines the UTP pocket. Residues 14–19 (SLGKGI) and Asp71 contribute to the ATP site. The Mg(2+) site is built by Asp71 and Glu139. CTP contacts are provided by residues 146-148 (DIE), 186-191 (KTKPTQ), and Lys222. UTP contacts are provided by residues 186–191 (KTKPTQ) and Lys222. Residues 290 to 541 (NIAMVGKYME…VNAALEYKAK (252 aa)) enclose the Glutamine amidotransferase type-1 domain. Gly351 contacts L-glutamine. Catalysis depends on Cys378, which acts as the Nucleophile; for glutamine hydrolysis. Residues 379–382 (LGMQ), Glu402, and Arg469 each bind L-glutamine. Residues His514 and Glu516 contribute to the active site.

Belongs to the CTP synthase family. As to quaternary structure, homotetramer.

It carries out the reaction UTP + L-glutamine + ATP + H2O = CTP + L-glutamate + ADP + phosphate + 2 H(+). The enzyme catalyses L-glutamine + H2O = L-glutamate + NH4(+). It catalyses the reaction UTP + NH4(+) + ATP = CTP + ADP + phosphate + 2 H(+). The protein operates within pyrimidine metabolism; CTP biosynthesis via de novo pathway; CTP from UDP: step 2/2. With respect to regulation, allosterically activated by GTP, when glutamine is the substrate; GTP has no effect on the reaction when ammonia is the substrate. The allosteric effector GTP functions by stabilizing the protein conformation that binds the tetrahedral intermediate(s) formed during glutamine hydrolysis. Inhibited by the product CTP, via allosteric rather than competitive inhibition. Functionally, catalyzes the ATP-dependent amination of UTP to CTP with either L-glutamine or ammonia as the source of nitrogen. Regulates intracellular CTP levels through interactions with the four ribonucleotide triphosphates. This is CTP synthase from Stutzerimonas stutzeri (strain A1501) (Pseudomonas stutzeri).